The primary structure comprises 554 residues: Formate--tetrahydrofolate ligase (554 aa).

65-72 lines the ATP pocket; the sequence is TPLGEGKT.

The protein belongs to the formate--tetrahydrofolate ligase family.

The enzyme catalyses (6S)-5,6,7,8-tetrahydrofolate + formate + ATP = (6R)-10-formyltetrahydrofolate + ADP + phosphate. It participates in one-carbon metabolism; tetrahydrofolate interconversion. The chain is Formate--tetrahydrofolate ligase from Aliivibrio salmonicida (strain LFI1238) (Vibrio salmonicida (strain LFI1238)).